Here is a 638-residue protein sequence, read N- to C-terminus: uncharacterized protein (638 aa).

One can recognise a CID domain in the interval 1–138; sequence MDLVELDYLS…KIENALLKYK (138 aa). Disordered stretches follow at residues 318–338 and 615–638; these read QPPLTHSYVHPGPQSHKYSLS and LGKRKERDDSMDSMSSKVIKQESK.

This is an uncharacterized protein from Schizosaccharomyces pombe (strain 972 / ATCC 24843) (Fission yeast).